The chain runs to 377 residues: Histone deacetylase 8 (377 aa).

Residues 14–324 form a histone deacetylase region; it reads LPPVYIYSPE…WTYLTGVILG (311 aa). At Ser-39 the chain carries Phosphoserine. Asp-101 lines the substrate pocket. His-143 (proton acceptor) is an active-site residue. Gly-151 serves as a coordination point for substrate. A divalent metal cation-binding residues include Asp-178, His-180, and Asp-267. Tyr-306 is a binding site for substrate.

This sequence belongs to the histone deacetylase family. HD type 1 subfamily. As to quaternary structure, interacts with CBFA2T3. Interacts with phosphorylated SMG5/EST1B; this interaction protects SMG5 from ubiquitin-mediated degradation. Associates with alpha-SMA (smooth muscle alpha-actin). A divalent metal cation serves as cofactor. Post-translationally, phosphorylated by PKA on serine 39. Phosphorylation reduces deacetylase activity observed preferentially on histones H3 and H4.

It is found in the nucleus. It localises to the chromosome. The protein resides in the cytoplasm. It carries out the reaction N(6)-acetyl-L-lysyl-[histone] + H2O = L-lysyl-[histone] + acetate. The enzyme catalyses N(6)-acetyl-L-lysyl-[protein] + H2O = L-lysyl-[protein] + acetate. It catalyses the reaction N(6)-(2E)-butenoyl-L-lysyl-[protein] + H2O = (2E)-2-butenoate + L-lysyl-[protein]. Its activity is regulated as follows. Its activity is inhibited by trichostatin A (TSA) and butyrate, 2 well known histone deacetylase inhibitors. Functionally, histone deacetylase that catalyzes the deacetylation of lysine residues on the N-terminal part of the core histones (H2A, H2B, H3 and H4). Histone deacetylation gives a tag for epigenetic repression and plays an important role in transcriptional regulation, cell cycle progression and developmental events. Histone deacetylases act via the formation of large multiprotein complexes. Also involved in the deacetylation of cohesin complex protein SMC3 regulating release of cohesin complexes from chromatin. May play a role in smooth muscle cell contractility. In addition to protein deacetylase activity, also has protein-lysine deacylase activity: acts as a protein decrotonylase by mediating decrotonylation ((2E)-butenoyl) of histones. The chain is Histone deacetylase 8 (Hdac8) from Rattus norvegicus (Rat).